Here is a 124-residue protein sequence, read N- to C-terminus: Ribonuclease pancreatic (124 aa).

The segment covering 1-13 has biased composition (basic and acidic residues); sequence KETAAEKFQRQHM. The tract at residues 1-21 is disordered; that stretch reads KETAAEKFQRQHMDTSSSLSN. K7 and R10 together coordinate substrate. The Proton acceptor role is filled by H12. Disulfide bonds link C26–C84, C40–C95, C58–C110, and C65–C72. A glycan (N-linked (GlcNAc...) asparagine) is linked at N34. Residues 41-45, K66, and R85 contribute to the substrate site; that span reads KPVNT. H119 functions as the Proton donor in the catalytic mechanism.

The protein belongs to the pancreatic ribonuclease family. In terms of assembly, monomer. Interacts with and forms tight 1:1 complexes with RNH1. Dimerization of two such complexes may occur. Interaction with RNH1 inhibits this protein. As to expression, pancreas.

It is found in the secreted. The catalysed reaction is an [RNA] containing cytidine + H2O = an [RNA]-3'-cytidine-3'-phosphate + a 5'-hydroxy-ribonucleotide-3'-[RNA].. It carries out the reaction an [RNA] containing uridine + H2O = an [RNA]-3'-uridine-3'-phosphate + a 5'-hydroxy-ribonucleotide-3'-[RNA].. Its function is as follows. Endonuclease that catalyzes the cleavage of RNA on the 3' side of pyrimidine nucleotides. Acts on single-stranded and double-stranded RNA. This Hippopotamus amphibius (Hippopotamus) protein is Ribonuclease pancreatic (RNASE1).